A 695-amino-acid chain; its full sequence is Nicastrin (695 aa).

A signal peptide spans Met1–Ala22. The Extracellular segment spans residues Gln23–Gln654. 9 N-linked (GlcNAc...) asparagine glycosylation sites follow: Asn45, Asn108, Asn116, Asn138, Asn381, Asn461, Asn489, Asn585, and Asn609. Residues Val655 to Ile675 traverse the membrane as a helical segment. Residues Ser676–Gly695 lie on the Cytoplasmic side of the membrane.

Belongs to the nicastrin family. In terms of assembly, component of the gamma-secretase complex, a complex composed of a presenilin (Psn) homodimer, nicastrin (Nct), Aph-1 and Pen-2.

The protein resides in the membrane. Its function is as follows. Essential subunit of the gamma-secretase complex, an endoprotease complex that catalyzes the intramembrane cleavage of integral membrane proteins such as Notch. It probably represents a stabilizing cofactor required for the assembly of the gamma-secretase complex. The sequence is that of Nicastrin from Drosophila melanogaster (Fruit fly).